Reading from the N-terminus, the 398-residue chain is Unsaturated chondroitin disaccharide hydrolase (398 aa).

The active-site Nucleophile is the Asp115. Substrate-binding residues include Asp115, Asp175, Gly233, Thr235, Arg247, Trp251, Ser365, and Ser368. Asp175 (proton donor) is an active-site residue.

It belongs to the glycosyl hydrolase 88 family. Monomer.

It carries out the reaction beta-D-4-deoxy-Delta(4)-GlcpA-(1-&gt;3)-beta-D-GalpNAc6S + H2O = N-acetyl-beta-D-galactosamine 6-sulfate + 5-dehydro-4-deoxy-D-glucuronate. Functionally, catalyzes the hydrolysis of unsaturated hyaluronate and chondroitin disaccharides. Also degrades unsaturated heparin disaccharides. Releases 4-deoxy-4,5-didehydro D-glucuronic acid or 4-deoxy-4,5-didehydro L-iduronic acid from chondroitin disaccharides, hyaluronan disaccharides and heparin disaccharides and cleaves both glycosidic (1-&gt;3) and (1-&gt;4) bonds. Prefers sulfated glycosaminoglycans compared to unsulfated glycosaminoglycans. Probably required for mammalian cells invasion through the degradation of extracellular sulfated glycosaminoglycans such as chondroitin and hyaluronan. The chain is Unsaturated chondroitin disaccharide hydrolase from Streptococcus agalactiae serotype III (strain NEM316).